The chain runs to 349 residues: MIEFDNLTYLHGKPQGTGLLKANPEDFVVVEDLGFEPDGEGEHILVRILKNGCNTRFVADALAKFLKIHAREVSFAGQKDKHAVTEQWLCARVPGKEMPELSAFQLEGCQVLEYARHKRKLRLGALKGNAFTLVLREVSNRDDVEQRLIDICVKGVPNYFGAQRFGIGGSNLQGALRWAQTNTPVRDRNKRSFWLSAARSALFNQIVAERLKKADVNQVVDGDALQLAGRGSWFVATTEELAELQRRVNDKELMITAALPGSGEWGTQREALAFEQAAVAAETELQALLVREKVEAARRAMLLYPQQLSWNWWDDVTVEIRFWLPAGSFATSVVRELINTTGDYAHIAE.

Phenylalanine 27 contacts substrate. Aspartate 80 functions as the Nucleophile in the catalytic mechanism. Asparagine 129 contributes to the substrate binding site. The TRUD domain maps to 155–303 (GVPNYFGAQR…VEAARRAMLL (149 aa)). Phenylalanine 329 provides a ligand contact to substrate.

Belongs to the pseudouridine synthase TruD family.

It carries out the reaction uridine(13) in tRNA = pseudouridine(13) in tRNA. In terms of biological role, responsible for synthesis of pseudouridine from uracil-13 in transfer RNAs. The protein is tRNA pseudouridine synthase D of Escherichia coli (strain 55989 / EAEC).